We begin with the raw amino-acid sequence, 344 residues long: MKVEYHTVYLKKRFPLRISRGVFEGSDNLYISLTENGHTGWGEMAPGGTEGAETAAAGQAMLEQFCATGLSASIHDTWQNAHAAGVAPCALAALDMALWDLRAKQAGVPLYALLGLARRAVVSSVTVGINPPDVVRERVPLLLARGARALKIKLGSPEGIEADQAMFAAVFEAAQGSGAVLRVDANGGWSLKDARRMMGWLAEHDVEYIEQPLVRGAEDQLPDLFKDRAMPIFVDESCRMSGDIATFFQSVDGVNLKLMKCGGITEALRIVATARAFGLKTMIGCMGESSVSIAAGASIGALFDYIDLDSHLNLDPDPATGAPFENGITLPADQPGHGGVLSHA.

Substrate is bound by residues threonine 126 and 151–153 (KIK). Residues aspartate 184, glutamate 210, and aspartate 235 each contribute to the Mg(2+) site. Substrate is bound by residues lysine 257 and 307–309 (DLD).

It belongs to the mandelate racemase/muconate lactonizing enzyme family. Requires Mg(2+) as cofactor.

Dipeptide epimerase with a preference for hydrophobic substrates. Catalyzes the epimerization of L-Ala-L-Thr, L-Ala-L-Met, L-Ala-L-His, L-Ala-L-Phe, L-Ala-L-Tyr, L-Ala-L-Trp, L-Ile-L-Ala, L-Ile-L-Ser, L-Ile-L-Met, L-Ile-L-His, L-Ile-L-Phe, L-Ile-L-Tyr, L-Ile-L-Trp, L-Phe-L-Met, L-Phe-L-His, L-Phe-L-Phe, L-Phe-L-Tyr, L-Phe-L-Trp, L-Phe-L-Ser, L-Phe-L-Thr and L-Phe-L-Lys (in vitro). The chain is Hydrophobic dipeptide epimerase from Roseobacter litoralis (strain ATCC 49566 / DSM 6996 / JCM 21268 / NBRC 15278 / OCh 149).